The following is a 678-amino-acid chain: Depolymerase 2, capsule K56-specific (678 aa).

In the N-terminal section; belongs to the Przondovirus depolymerase 2 family. As to quaternary structure, homotrimer. Interacts (via N-terminus) with depolymerase 1 (via N-terminus); this interaction probably gives rise to a branched tailspike.

It is found in the virion. Functionally, functions as a receptor binding protein (RBP) and probably mediates the attachment to the host capsular exopolysaccharides. Displays a depolymerase activity that specifically degrades the K56-type polysaccharides of Klebsiella pneumoniae capsule, which allows the phage to reach the host cell membrane and bind the entry receptor. This Klebsiella pneumoniae (Bacteriophage KN3-1) protein is Depolymerase 2, capsule K56-specific.